The primary structure comprises 122 residues: uncharacterized protein (122 aa).

Residues 1 to 15 (MAEPGGRGDYHKDGR) show a composition bias toward basic and acidic residues. Residues 1–26 (MAEPGGRGDYHKDGRPPSLSRSPLFT) are disordered.

This is an uncharacterized protein from Macaca fascicularis (Crab-eating macaque).